Reading from the N-terminus, the 219-residue chain is Mediator of RNA polymerase II transcription subunit 20b (219 aa).

The protein belongs to the Mediator complex subunit 20 family. In terms of assembly, component of the Mediator complex.

The protein resides in the nucleus. Component of the Mediator complex, a coactivator involved in the regulated transcription of nearly all RNA polymerase II-dependent genes. Mediator functions as a bridge to convey information from gene-specific regulatory proteins to the basal RNA polymerase II transcription machinery. The Mediator complex, having a compact conformation in its free form, is recruited to promoters by direct interactions with regulatory proteins and serves for the assembly of a functional preinitiation complex with RNA polymerase II and the general transcription factors. This chain is Mediator of RNA polymerase II transcription subunit 20b (MED20B), found in Arabidopsis thaliana (Mouse-ear cress).